Consider the following 872-residue polypeptide: Alanine--tRNA ligase (872 aa).

Residues His567, His571, Cys669, and His673 each coordinate Zn(2+).

Belongs to the class-II aminoacyl-tRNA synthetase family. Zn(2+) is required as a cofactor.

It localises to the cytoplasm. The enzyme catalyses tRNA(Ala) + L-alanine + ATP = L-alanyl-tRNA(Ala) + AMP + diphosphate. In terms of biological role, catalyzes the attachment of alanine to tRNA(Ala) in a two-step reaction: alanine is first activated by ATP to form Ala-AMP and then transferred to the acceptor end of tRNA(Ala). Also edits incorrectly charged Ser-tRNA(Ala) and Gly-tRNA(Ala) via its editing domain. This Streptococcus thermophilus (strain CNRZ 1066) protein is Alanine--tRNA ligase.